A 66-amino-acid chain; its full sequence is Photosystem II reaction center protein J (66 aa).

The helical transmembrane segment at 37–57 threads the bilayer; it reads LWLVATAGGMAVLFVVGLFFY.

This sequence belongs to the PsbJ family. As to quaternary structure, PSII is composed of 1 copy each of membrane proteins PsbA, PsbB, PsbC, PsbD, PsbE, PsbF, PsbH, PsbI, PsbJ, PsbK, PsbL, PsbM, PsbT, PsbX, PsbY, PsbZ, Psb30/Ycf12, peripheral proteins PsbO, CyanoQ (PsbQ), PsbU, PsbV and a large number of cofactors. It forms dimeric complexes.

The protein resides in the cellular thylakoid membrane. In terms of biological role, one of the components of the core complex of photosystem II (PSII). PSII is a light-driven water:plastoquinone oxidoreductase that uses light energy to abstract electrons from H(2)O, generating O(2) and a proton gradient subsequently used for ATP formation. It consists of a core antenna complex that captures photons, and an electron transfer chain that converts photonic excitation into a charge separation. This chain is Photosystem II reaction center protein J, found in Synechococcus sp. (strain WH7803).